Here is a 616-residue protein sequence, read N- to C-terminus: Dihydroxy-acid dehydratase (616 aa).

D81 contacts Mg(2+). C122 contributes to the [2Fe-2S] cluster binding site. Mg(2+)-binding residues include D123 and K124. Residue K124 is modified to N6-carboxylysine. C195 is a [2Fe-2S] cluster binding site. Mg(2+) is bound at residue E491. Residue S517 is the Proton acceptor of the active site.

The protein belongs to the IlvD/Edd family. Homodimer. Requires [2Fe-2S] cluster as cofactor. It depends on Mg(2+) as a cofactor.

It catalyses the reaction (2R)-2,3-dihydroxy-3-methylbutanoate = 3-methyl-2-oxobutanoate + H2O. It carries out the reaction (2R,3R)-2,3-dihydroxy-3-methylpentanoate = (S)-3-methyl-2-oxopentanoate + H2O. Its pathway is amino-acid biosynthesis; L-isoleucine biosynthesis; L-isoleucine from 2-oxobutanoate: step 3/4. It participates in amino-acid biosynthesis; L-valine biosynthesis; L-valine from pyruvate: step 3/4. Its function is as follows. Functions in the biosynthesis of branched-chain amino acids. Catalyzes the dehydration of (2R,3R)-2,3-dihydroxy-3-methylpentanoate (2,3-dihydroxy-3-methylvalerate) into 2-oxo-3-methylpentanoate (2-oxo-3-methylvalerate) and of (2R)-2,3-dihydroxy-3-methylbutanoate (2,3-dihydroxyisovalerate) into 2-oxo-3-methylbutanoate (2-oxoisovalerate), the penultimate precursor to L-isoleucine and L-valine, respectively. This is Dihydroxy-acid dehydratase from Escherichia coli (strain K12 / MC4100 / BW2952).